The sequence spans 144 residues: 3-hydroxyacyl-[acyl-carrier-protein] dehydratase FabZ (144 aa).

The active site involves His-48.

The protein belongs to the thioester dehydratase family. FabZ subfamily.

The protein resides in the cytoplasm. The catalysed reaction is a (3R)-hydroxyacyl-[ACP] = a (2E)-enoyl-[ACP] + H2O. In terms of biological role, involved in unsaturated fatty acids biosynthesis. Catalyzes the dehydration of short chain beta-hydroxyacyl-ACPs and long chain saturated and unsaturated beta-hydroxyacyl-ACPs. In Bacillus pumilus (strain SAFR-032), this protein is 3-hydroxyacyl-[acyl-carrier-protein] dehydratase FabZ.